Consider the following 901-residue polypeptide: Mediator of RNA polymerase II transcription subunit 14 (901 aa).

It belongs to the Mediator complex subunit 14 family. Component of the Mediator complex.

Its subcellular location is the nucleus. Component of the Mediator complex, a coactivator involved in the regulated transcription of nearly all RNA polymerase II-dependent genes. Mediator functions as a bridge to convey information from gene-specific regulatory proteins to the basal RNA polymerase II transcription machinery. Mediator is recruited to promoters by direct interactions with regulatory proteins and serves as a scaffold for the assembly of a functional preinitiation complex with RNA polymerase II and the general transcription factors. The polypeptide is Mediator of RNA polymerase II transcription subunit 14 (RGR1) (Yarrowia lipolytica (strain CLIB 122 / E 150) (Yeast)).